The following is a 949-amino-acid chain: MQKIKSLMTRQGLRSPQESVHDLSPIENLRFPTKEELRESWEEPTDPQAQQEIINSIEEVYFSNDAFDIVKYELERLPPVLSLQELEEYRDKLKQQQAAELERVTSLQNGLQLAAVICADGRRHLNIAKEGFTQTSLGLLANQRKRQLLIGLLKSLRTIKTLQRTDVRLSEMLEEEDYPGAIQLCLECQKAASTFKHYSCISELNSKLQDTLEQIEEQLDVALSKICKNFDINHYTKVQQAYRLLGKTQTAMDQLHMHFTQAIHNTVFQVVLGYVELCAGNTDTKFQKLQYKDLCTHITSDSYIPCLADLCKALWEVMLSYYRTMQWHENHDQDEAATVSSVSDGSSVVGTEENSFDRSYVKKKLEHGLSRIWQDVQLKVKTYLLGTDLSNFKYDDFIFVLDVISRLMQVGEEFCGSKSEVLQESIRKQSVNYFKTYHRTRLEELRMFLENETWELCPVKSSFDILQLHEFKFMVQSRSPSVSPSKQPASAISTTVTLFEQYCNGGNPFEIQADSKDDETEDVLASNGYESDEQEKSAYQEYDSDSDVPEELKRDYVDEQTGDAPMKSVSRETLRSRKKSDYSLNKGNAPILTNTTLNVVRLVGKYMQMMNILKPIAFDVIHFMSQLFDYYLYAVYTFFGRNDTFESTGLGLSSSRLRTTLNRIQESLIDLEVSADPTGTLTAAEERKEKVPSPHLSHLVVLTSGSSLYGLAERVVATESLVFLAEQFEFLQPHLDAVMPAAKKPFLQQFYSQTVSTANELRKPVYWIVAAKAIDYEQMLLLMANVKWDVKEIMSQHNVYVDSLLKEFEEFNRRLNEVSKRVRIPLIVSNILWEHCMRLANRTLVEGYANVKKCSNEGRALMQLDFQQFLMKLEKLTDIRPIPDKEFVETYIKAYYLTENDMERWIKEHREYSTKHLTNLVNVCLGSHINKKARQKLLAAIDDIDRPKR.

The segment at 1–28 is disordered; sequence MQKIKSLMTRQGLRSPQESVHDLSPIEN. A compositionally biased stretch (polar residues) spans 8–18; the sequence is MTRQGLRSPQE. Coiled coils occupy residues 82-104 and 198-226; these read SLQE…LERV and YSCI…LSKI. The tract at residues 509–581 is disordered; the sequence is FEIQADSKDD…ETLRSRKKSD (73 aa). Basic and acidic residues predominate over residues 569–581; the sequence is VSRETLRSRKKSD.

Belongs to the syndetin family. Component of the endosome-associated retrograde protein (EARP) complex.

It is found in the recycling endosome. The protein localises to the membrane. Its function is as follows. Acts as a component of the EARP complex that is involved in endocytic recycling. The EARP complex associates with Rab4-positive endosomes and promotes recycling of internalized transferrin receptor (TFRC) to the plasma membrane. This Gallus gallus (Chicken) protein is Syndetin.